Consider the following 78-residue polypeptide: UPF0291 protein LBUL_1264 (78 aa).

The protein belongs to the UPF0291 family.

The protein localises to the cytoplasm. The sequence is that of UPF0291 protein LBUL_1264 from Lactobacillus delbrueckii subsp. bulgaricus (strain ATCC BAA-365 / Lb-18).